The following is a 427-amino-acid chain: MESLTLQPIARVDGAINLPGSKSVSNRALLLAALACGKTVLTNLLDSDDVRHMLNALSALGINYTLSADRTRCDITGNGGALRAPGALELFLGNAGTAMRPLAAALCLGQNEIVLTGEPRMKERPIGHLVDSLRQGGANIDYLEQENYPPLRLRGGFTGGDIEVDGSVSSQFLTALLMTAPLAPEDTIIRVKGELVSKPYIDITLNLMKTFGVEIANHHYQQFVVKGGQQYHSPGRYLVEGDASSASYFLAAGAIKGGTVKVTGIGRKSMQGDIRFADVLEKMGATITWGDDFIACTRGELHAIDMDMNHIPDAAMTIATTALFAKGTTTLRNIYNWRVKETDRLFAMATELRKVGAEVEEGHDYIRITPPAKLQHADIGTYNDHRMAMCFSLVALSDTPVTILDPKCTAKTFPDYFEQLARMSTPA.

3-phosphoshikimate-binding residues include Lys22, Ser23, and Arg27. A phosphoenolpyruvate-binding site is contributed by Lys22. Gly96 and Arg124 together coordinate phosphoenolpyruvate. 7 residues coordinate 3-phosphoshikimate: Ser169, Ser170, Gln171, Ser197, Asp313, Asn336, and Lys340. Gln171 lines the phosphoenolpyruvate pocket. Catalysis depends on Asp313, which acts as the Proton acceptor. Phosphoenolpyruvate contacts are provided by Arg344, Arg386, and Lys411.

Belongs to the EPSP synthase family. As to quaternary structure, monomer.

It is found in the cytoplasm. The enzyme catalyses 3-phosphoshikimate + phosphoenolpyruvate = 5-O-(1-carboxyvinyl)-3-phosphoshikimate + phosphate. The protein operates within metabolic intermediate biosynthesis; chorismate biosynthesis; chorismate from D-erythrose 4-phosphate and phosphoenolpyruvate: step 6/7. Functionally, catalyzes the transfer of the enolpyruvyl moiety of phosphoenolpyruvate (PEP) to the 5-hydroxyl of shikimate-3-phosphate (S3P) to produce enolpyruvyl shikimate-3-phosphate and inorganic phosphate. The chain is 3-phosphoshikimate 1-carboxyvinyltransferase from Salmonella newport (strain SL254).